The following is a 316-amino-acid chain: Ribosomal protein L11 methyltransferase (316 aa).

S-adenosyl-L-methionine-binding residues include Thr157, Gly178, Asp200, and Asn243.

It belongs to the methyltransferase superfamily. PrmA family.

It is found in the cytoplasm. The enzyme catalyses L-lysyl-[protein] + 3 S-adenosyl-L-methionine = N(6),N(6),N(6)-trimethyl-L-lysyl-[protein] + 3 S-adenosyl-L-homocysteine + 3 H(+). Its function is as follows. Methylates ribosomal protein L11. This chain is Ribosomal protein L11 methyltransferase, found in Streptococcus pneumoniae serotype 4 (strain ATCC BAA-334 / TIGR4).